The chain runs to 584 residues: Zinc finger and BTB domain-containing protein 7A (584 aa).

One can recognise a BTB domain in the interval 34-101 (CDVVILVEGR…AYTATLTVST (68 aa)). The interval 220–313 (YGPGPPAERP…EDGDGPDVDG (94 aa)) is disordered. A mediates interaction with KHDRBS1 region spans residues 277 to 584 (EEEAASLSEA…TDGNFTAGLA (308 aa)). The span at 281–290 (ASLSEAAPEP) shows a compositional bias: low complexity. A phosphoserine mark is found at S337 and S341. A mediates interaction with RELA region spans residues 349–584 (MDYYLKYFSG…TDGNFTAGLA (236 aa)). The mediates interaction with SMAD4 stretch occupies residues 377 to 584 (RAKAFQKCPI…TDGNFTAGLA (208 aa)). C2H2-type zinc fingers lie at residues 382–404 (QKCPICEKVIQGAGKLPRHIRTH) and 410–432 (YECNICKVRFTRQDKLKVHMRKH). Residue K436 forms a Glycyl lysine isopeptide (Lys-Gly) (interchain with G-Cter in SUMO2) linkage. The C2H2-type 3 zinc finger occupies 438–460 (YLCQQCGAAFAHNYDLKNHMRVH). Residues 466-490 (YQCDSCCKTFVRSDHLHRHLKKDGC) form a C2H2-type 4; atypical zinc finger. The segment at 486–584 (KKDGCNGVPS…TDGNFTAGLA (99 aa)) is disordered. The span at 505-527 (GGAPDPSPGATATPGAPAQPSSP) shows a compositional bias: low complexity. Residues S511, S525, and S526 each carry the phosphoserine modification. Residues 528-540 (DARRNGQEKHFKD) show a composition bias toward basic and acidic residues. K539 is covalently cross-linked (Glycyl lysine isopeptide (Lys-Gly) (interchain with G-Cter in SUMO2)). S549 is modified (phosphoserine). A compositionally biased stretch (gly residues) spans 560 to 572 (GAGGGGDSGGGPG).

Homodimer. Interacts with BCL6. Interacts with RELA; involved in the control by RELA of the accessibility of target gene promoters. Interacts with AR (via NR LBD domain); the interaction is direct and androgen-dependent. Interacts with NCOR1. Interacts with NCOR2. Interacts with SMAD4; the interaction is direct and stimulated by TGFB1. Interacts with HDAC1. Interacts with SP1; ZBTB7A prevents the binding to GC-rich motifs in promoters and represses the transcriptional activity of SP1. Interacts with the DNA-dependent protein kinase complex/DNA-PKc. Interacts with KHDRBS1; negatively regulates KHDRBS1 splicing activity. Post-translationally, sumoylated. Undergoes sumoylation with SUMO1 that may regulate its transcriptional activity. As to expression, widely expressed. In normal thymus, expressed in medullary epithelial cells and Hassle's corpuscles (at protein level). In tonsil, expressed in squamous epithelium and germinal center lymphocytes (at protein level). Up-regulated in a subset of lymphomas, as well as in a subset of breast, lung, colon, prostate and bladder carcinomas (at protein level). Expressed in adipose tissues.

It is found in the nucleus. In terms of biological role, transcription factor that represses the transcription of a wide range of genes involved in cell proliferation and differentiation. Directly and specifically binds to the consensus sequence 5'-[GA][CA]GACCCCCCCCC-3' and represses transcription both by regulating the organization of chromatin and through the direct recruitment of transcription factors to gene regulatory regions. Negatively regulates SMAD4 transcriptional activity in the TGF-beta signaling pathway through these two mechanisms. That is, recruits the chromatin regulator HDAC1 to the SMAD4-DNA complex and in parallel prevents the recruitment of the transcriptional activators CREBBP and EP300. Collaborates with transcription factors like RELA to modify the accessibility of gene transcription regulatory regions to secondary transcription factors. Also directly interacts with transcription factors like SP1 to prevent their binding to DNA. Functions as an androgen receptor/AR transcriptional corepressor by recruiting NCOR1 and NCOR2 to the androgen response elements/ARE on target genes. Thereby, negatively regulates androgen receptor signaling and androgen-induced cell proliferation. Involved in the switch between fetal and adult globin expression during erythroid cells maturation. Through its interaction with the NuRD complex regulates chromatin at the fetal globin genes to repress their transcription. Specifically represses the transcription of the tumor suppressor ARF isoform from the CDKN2A gene. Efficiently abrogates E2F1-dependent CDKN2A transactivation. Regulates chondrogenesis through the transcriptional repression of specific genes via a mechanism that also requires histone deacetylation. Regulates cell proliferation through the transcriptional regulation of genes involved in glycolysis. Involved in adipogenesis through the regulation of genes involved in adipocyte differentiation. Plays a key role in the differentiation of lymphoid progenitors into B and T lineages. Promotes differentiation towards the B lineage by inhibiting the T-cell instructive Notch signaling pathway through the specific transcriptional repression of Notch downstream target genes. Also regulates osteoclast differentiation. May also play a role, independently of its transcriptional activity, in double-strand break repair via classical non-homologous end joining/cNHEJ. Recruited to double-strand break sites on damage DNA, interacts with the DNA-dependent protein kinase complex and directly regulates its stability and activity in DNA repair. May also modulate the splicing activity of KHDRBS1 toward BCL2L1 in a mechanism which is histone deacetylase-dependent and thereby negatively regulates the pro-apoptotic effect of KHDRBS1. The protein is Zinc finger and BTB domain-containing protein 7A of Homo sapiens (Human).